Consider the following 850-residue polypeptide: Protein SEY1 (850 aa).

Residues 1 to 27 (MSDLPPPDLGSEEISVSPTSSSSSFVP) form a disordered region. The Cytoplasmic segment spans residues 1-741 (MSDLPPPDLG…KRALIQHVTH (741 aa)). The span at 12 to 27 (EEISVSPTSSSSSFVP) shows a compositional bias: low complexity. Positions 64 to 297 (NNNYHIVSVF…NEDFLFKKYY (234 aa)) constitute a GB1/RHD3-type G domain. 74–81 (GSQSTGKS) provides a ligand contact to GTP. Residues 742–762 (IPYYIYIVILVLGWNEFMAVL) traverse the membrane as a helical segment. The Lumenal portion of the chain corresponds to 763 to 765 (RNP). Residues 766–786 (FFFTLLLMLGAGTYVLYHLNL) traverse the membrane as a helical segment. Residues 787-850 (LKPAMVVVQR…SDLTPPGEGS (64 aa)) lie on the Cytoplasmic side of the membrane. The disordered stretch occupies residues 816–850 (QPQEHAKRLSKMAGITEDKPEEIEMSDLTPPGEGS).

It belongs to the TRAFAC class dynamin-like GTPase superfamily. GB1/RHD3 GTPase family. RHD3 subfamily.

Its subcellular location is the endoplasmic reticulum membrane. In terms of biological role, cooperates with the reticulon proteins and tubule-shaping DP1 family proteins to generate and maintain the structure of the tubular endoplasmic reticulum network. Has GTPase activity, which is required for its function in ER organization. In Meyerozyma guilliermondii (strain ATCC 6260 / CBS 566 / DSM 6381 / JCM 1539 / NBRC 10279 / NRRL Y-324) (Yeast), this protein is Protein SEY1.